Here is a 210-residue protein sequence, read N- to C-terminus: Proteasome subunit beta (210 aa).

Positions 1-9 (MDNDKHLKG) are cleaved as a propeptide — removed in mature form; by autocatalysis. Thr10 acts as the Nucleophile in catalysis.

It belongs to the peptidase T1B family. As to quaternary structure, the 20S proteasome core is composed of 14 alpha and 14 beta subunits that assemble into four stacked heptameric rings, resulting in a barrel-shaped structure. The two inner rings, each composed of seven catalytic beta subunits, are sandwiched by two outer rings, each composed of seven alpha subunits. The catalytic chamber with the active sites is on the inside of the barrel. Has a gated structure, the ends of the cylinder being occluded by the N-termini of the alpha-subunits. Is capped at one or both ends by the proteasome regulatory ATPase, PAN.

It is found in the cytoplasm. The enzyme catalyses Cleavage of peptide bonds with very broad specificity.. The formation of the proteasomal ATPase PAN-20S proteasome complex, via the docking of the C-termini of PAN into the intersubunit pockets in the alpha-rings, triggers opening of the gate for substrate entry. Interconversion between the open-gate and close-gate conformations leads to a dynamic regulation of the 20S proteasome proteolysis activity. In terms of biological role, component of the proteasome core, a large protease complex with broad specificity involved in protein degradation. This Methanohalophilus mahii (strain ATCC 35705 / DSM 5219 / SLP) protein is Proteasome subunit beta.